The following is a 102-amino-acid chain: MGLTEIMLVLVSLAFVATAAAHDCQNGTRPASEEKREGCDYYCWNTETKSWDKFFFGNGERCFYNNGDEGLCQNGECHLTTDSGVPNDTDAKIEETEEELEA.

The first 21 residues, 1–21 (MGLTEIMLVLVSLAFVATAAA), serve as a signal peptide directing secretion. Residues asparagine 26 and asparagine 87 are each glycosylated (N-linked (GlcNAc...) asparagine). The disordered stretch occupies residues 83–102 (SGVPNDTDAKIEETEEELEA).

This sequence belongs to the salp14 family. In terms of tissue distribution, salivary gland (at protein level). Saliva (at protein level). Midgut.

It localises to the secreted. Functionally, salivary protein that facilitates blood feeding of adult ticks on vertebrate species. Inhibits the lectin pathway of complement system activation in the host. The protein is Salivary protein Salp9 of Ixodes scapularis (Black-legged tick).